A 789-amino-acid chain; its full sequence is Glycerol-3-phosphate acyltransferase (789 aa).

The HXXXXD motif motif lies at 275–280; it reads SHRSYI.

The protein belongs to the GPAT/DAPAT family.

It localises to the cell membrane. The enzyme catalyses sn-glycerol 3-phosphate + an acyl-CoA = a 1-acyl-sn-glycero-3-phosphate + CoA. It participates in phospholipid metabolism; CDP-diacylglycerol biosynthesis; CDP-diacylglycerol from sn-glycerol 3-phosphate: step 1/3. This chain is Glycerol-3-phosphate acyltransferase, found in Mycobacterium bovis (strain BCG / Pasteur 1173P2).